The primary structure comprises 2359 residues: Voltage-dependent T-type calcium channel subunit alpha-1H (2359 aa).

The tract at residues 1–63 is disordered; sequence MTEGTLAADE…PGTECGADLG (63 aa). Topologically, residues 1–100 are cytoplasmic; that stretch reads MTEGTLAADE…SWCLRLVCNP (100 aa). The segment covering 24–36 has biased composition (low complexity); the sequence is APVRASPASPGAP. The I repeat unit spans residues 87–422; sequence TRPRSWCLRL…LCLVVIATQF (336 aa). A helical membrane pass occupies residues 101–119; sequence WFEHISMLVIMLNCVTLGM. Residues 120–141 lie on the Extracellular side of the membrane; the sequence is FRPCEDVECRSERCSILEAFDD. A Zn(2+)-binding site is contributed by D140. The helical transmembrane segment at 142–160 threads the bilayer; it reads FIFAFFAVEMVIKMVALGL. At 161–169 the chain is on the cytoplasmic side; sequence FGQKCYLGD. The helical transmembrane segment at 170–184 threads the bilayer; that stretch reads TWNRLDFFIVMAGMM. Residues 185–193 are Extracellular-facing; that stretch reads EYSLDGHNV. Residues D189 and H191 each contribute to the Zn(2+) site. The N-linked (GlcNAc...) asparagine glycan is linked to N192. The helical transmembrane segment at 194-212 threads the bilayer; sequence SLSAIRTVRVLRPLRAINR. Residues 213–232 are Cytoplasmic-facing; the sequence is VPSMRILVTLLLDTLPMLGN. Residues 233–253 traverse the membrane as a helical segment; it reads VLLLCFFVFFIFGIVGVQLWA. The Extracellular portion of the chain corresponds to 254 to 394; that stretch reads GLLRNRCFLD…YYVMDAHSFY (141 aa). A glycan (N-linked (GlcNAc...) asparagine) is linked at N271. A helical membrane pass occupies residues 395–419; it reads NFIYFILLIIMGSFFMINLCLVVIA. Over 420-790 the chain is Cytoplasmic; it reads TQFSETKQRE…GKLRRIVDSK (371 aa). Disordered regions lie at residues 490–573, 620–656, and 737–769; these read VDPS…SESV, GTVN…SPRP, and GDCR…ASQP. Basic residues predominate over residues 503 to 532; it reads RRPRRAGRRTASVHHLVYHHHHHHHHHYHF. The segment covering 557–566 has biased composition (pro residues); the sequence is PPSPPSPGHG. The segment covering 620–631 has biased composition (polar residues); the sequence is GTVNSKGGTSSR. An II repeat occupies 776 to 1015; the sequence is WASFSGKLRR…LLVAILVEGF (240 aa). The chain crosses the membrane as a helical span at residues 791–811; that stretch reads YFNRGIMAAILVNTLSMGVEY. At 812–824 the chain is on the extracellular side; the sequence is HEQPEELTNALEI. A helical membrane pass occupies residues 825-846; that stretch reads SNIVFTSMFALEMLLKLLACGP. The Cytoplasmic portion of the chain corresponds to 847–852; the sequence is LGYIRN. A helical transmembrane segment spans residues 853-871; it reads PYNIFDGIVVVISVWEIVG. Residues 872–879 are Extracellular-facing; that stretch reads QANGGLSV. A helical membrane pass occupies residues 880–903; the sequence is LRTFRLLRVLKLVRFLPALRRQLV. Topologically, residues 904–914 are cytoplasmic; it reads VLMRTMDNVAT. A helical membrane pass occupies residues 915–935; sequence FCMLLMLFIFIFSILGMHLFG. The Extracellular portion of the chain corresponds to 936 to 987; the sequence is CKFSLKTDSGDTVPDRKNFDSLLWAIVTVFQILTQEDWNVVLYNGMASTSSW. The chain crosses the membrane as a helical span at residues 988–1012; sequence AALYFVALMTFGNYVLFNLLVAILV. Residues 1013 to 1301 lie on the Cytoplasmic side of the membrane; that stretch reads EGFQAEGDAT…NRLRVSCQKV (289 aa). The segment at 1061-1197 is disordered; the sequence is GHLEGRGSLP…GASPGPRATP (137 aa). Residues 1117 to 1126 are compositionally biased toward polar residues; that stretch reads SLASLRSSPC. Positions 1130-1147 are enriched in low complexity; sequence GPNSAGSSRRSSWNSLGR. An III repeat occupies 1292–1569; the sequence is NRLRVSCQKV…MFVGVVVENF (278 aa). Residues 1302–1324 form a helical membrane-spanning segment; sequence IAHKMFDHVVLVFIFLNCITIAL. The Extracellular segment spans residues 1325–1342; sequence ERPDIDPGSTERAFLSVS. Residues 1343–1363 form a helical membrane-spanning segment; the sequence is NYIFTAIFVVEMMVKVVALGL. Residues 1364–1373 are Cytoplasmic-facing; it reads LWGEHAYLQS. A helical transmembrane segment spans residues 1374-1393; it reads SWNVLDGLLVLVSLVDIIVA. Residues 1394 to 1407 are Extracellular-facing; the sequence is MASAGGAKILGVLR. The helical transmembrane segment at 1408–1429 threads the bilayer; sequence VLRLLRTLRPLRVISRAPGLKL. Residues 1430–1439 are Cytoplasmic-facing; the sequence is VVETLISSLR. A helical membrane pass occupies residues 1440–1463; it reads PIGNIVLICCAFFIIFGILGVQLF. Residues 1464–1540 lie on the Extracellular side of the membrane; that stretch reads KGKFYYCEGT…DQQPVQNHNP (77 aa). N1477 is a glycosylation site (N-linked (GlcNAc...) asparagine). A helical transmembrane segment spans residues 1541–1566; it reads WMLLYFISFLLIVSFFVLNMFVGVVV. Residues 1567 to 1621 lie on the Cytoplasmic side of the membrane; sequence ENFHKCRQHQEAEEARRREEKRLRRLERRRRKAQRRPYYADYSHTRRSIHSLCTS. One copy of the IV repeat lies at 1607-1868; that stretch reads DYSHTRRSIH…VVVAVLMKHL (262 aa). A helical membrane pass occupies residues 1622–1642; sequence HYLDLFITFIICLNVITMSME. Residues 1643-1656 are Extracellular-facing; the sequence is HYNQPKSLDEALKY. The chain crosses the membrane as a helical span at residues 1657 to 1678; the sequence is CNYVFTIVFVFEAALKLVAFGF. Residues 1679–1685 are Cytoplasmic-facing; sequence RRFFKDR. Residues 1686-1704 form a helical membrane-spanning segment; the sequence is WNQLDLAIVLLSIMGIALE. The Extracellular portion of the chain corresponds to 1705–1718; sequence EIEMNAALPINPTI. The chain crosses the membrane as a helical span at residues 1719–1742; that stretch reads IRIMRVLRIARVLKLLKMATGMRA. The Cytoplasmic portion of the chain corresponds to 1743-1756; that stretch reads LLDTVVQALPQVGN. Residues 1757-1777 traverse the membrane as a helical segment; it reads LGLLFMLLFFIYAALGVELFG. Residues 1778-1840 are Extracellular-facing; it reads RLECSEDNPC…KHCLSYLPAL (63 aa). The helical transmembrane segment at 1841 to 1868 threads the bilayer; that stretch reads SPVYFVTFMLVAQFVLVNVVVAVLMKHL. The Cytoplasmic portion of the chain corresponds to 1869 to 2359; that stretch reads EESNKEARED…APDDSGDEPV (491 aa). Residues 1891 to 1911 show a composition bias toward polar residues; it reads QGSTAQPPPTAQESQGTQPDT. 4 disordered regions span residues 1891–1913, 1974–2003, 2016–2258, and 2335–2359; these read QGST…DTPN, SFQV…PRSL, HSES…GERW, and PQTP…DEPV. Basic and acidic residues predominate over residues 2016-2026; that stretch reads HSESLEGKVDD. Positions 2086–2096 are enriched in acidic residues; sequence DEAEAADPADE. Positions 2166–2181 are enriched in basic and acidic residues; the sequence is GESHLESGEVRGRASE.

It belongs to the calcium channel alpha-1 subunit (TC 1.A.1.11) family. CACNA1H subfamily. As to quaternary structure, interacts (via N-terminal cytoplasmic domain) with STAC. In terms of processing, in response to raising of intracellular calcium, the T-type channels are activated by CaM-kinase II. In terms of tissue distribution, expressed in brain.

It localises to the cell membrane. The enzyme catalyses Ca(2+)(in) = Ca(2+)(out). Voltage-sensitive calcium channel that gives rise to T-type calcium currents. T-type calcium channels belong to the 'low-voltage activated (LVA)' group. A particularity of this type of channel is an opening at quite negative potentials, and a voltage-dependent inactivation. T-type channels serve pacemaking functions in both central neurons and cardiac nodal cells and support calcium signaling in secretory cells and vascular smooth muscle. They may also be involved in the modulation of firing patterns of neurons. In the adrenal zona glomerulosa, participates in the signaling pathway leading to aldosterone production in response to either AGT/angiotensin II, or hyperkalemia. The polypeptide is Voltage-dependent T-type calcium channel subunit alpha-1H (Cacna1h) (Rattus norvegicus (Rat)).